Reading from the N-terminus, the 470-residue chain is 3-isopropylmalate dehydratase large subunit (470 aa).

Cysteine 347, cysteine 407, and cysteine 410 together coordinate [4Fe-4S] cluster.

It belongs to the aconitase/IPM isomerase family. LeuC type 1 subfamily. As to quaternary structure, heterodimer of LeuC and LeuD. [4Fe-4S] cluster is required as a cofactor.

It carries out the reaction (2R,3S)-3-isopropylmalate = (2S)-2-isopropylmalate. It participates in amino-acid biosynthesis; L-leucine biosynthesis; L-leucine from 3-methyl-2-oxobutanoate: step 2/4. Its function is as follows. Catalyzes the isomerization between 2-isopropylmalate and 3-isopropylmalate, via the formation of 2-isopropylmaleate. This Shewanella amazonensis (strain ATCC BAA-1098 / SB2B) protein is 3-isopropylmalate dehydratase large subunit.